Reading from the N-terminus, the 851-residue chain is MMIGKLKYLMLGGCLILGSCLALGGCLMLLGACSSSSLVSPRERSDFNADWRFHLGDGLQAAQPGFADNDWRVLDLPHDWAIEGDFSQENPSGTGGGALPGGVGWYRKTFSVDKADAGKIFRIEFDGVYMNSEVFINGVSLGVRPYGYISFSYDLTPYLKWDEPNVLAVRVDNAEQPNSRWYSGCGIYRNVWLSKTGPIHVGGWGTYVTTSSVDEKQAVLNLATTLVNESDTNENVTVCSSLQDAEGREVAETRSSGEAEAGKEVVFTQQLTVKQPQLWDIDTPYLYTLVTKVMRNEECMDRYTTPVGIRTFSLDARKGFTLNGRQTKINGVCMHHDLGCLGAAVNTRAIERHLQILKEMGCNGIRCSHNPPAPELLDLCDRMGFIVMDEAFDMWRKKKTAHDYARYFNEWHERDLNDFILRDRNHPSVFMWSIGNEVLEQWSDAKADTLSLEEANLILNFGHSSEMLAKEGEESVNSLLTKKLVSFVKGLDPTRPVTAGCNEPNSGNHLFRSGVLDVIGYNYHNKDIPNVPANFPDKPFIITESNSALMTRGYYRMPSDRMFIWPKRWDKSFADSTFACSSYENCHVPWGNTHEESLKLVRDNDFISGQYVWTGFDYIGEPTPYGWPARSSYFGIVDLAGFPKDVYYLYQSEWTDKQVLHLFPHWNWTPGQEIDMWCYYNQADEVELFVNGKSQGVKRKDLDNLHVAWRVKFEPGTVKVIARESGKVVAEKEICTAGKPAEIRLTPDRSILTADGKDLCFVTVEVLDEKGNLCPDADNLVNFTVQGNGFIAGVDNGNPVSMERFKDEKRKAFYGKCLVVIQNDGKPGKAKLTATSEGLRQAVLKISAEEL.

Positions 1-19 (MMIGKLKYLMLGGCLILGS) are cleaved as a signal peptide. The N-palmitoyl cysteine moiety is linked to residue Cys20. Cys20 carries S-diacylglycerol cysteine lipidation. Glu437 serves as the catalytic Proton donor. Glu544 acts as the Nucleophile in catalysis.

Belongs to the glycosyl hydrolase 2 family.

The protein localises to the cell inner membrane. It catalyses the reaction Hydrolysis of terminal non-reducing beta-D-galactose residues in beta-D-galactosides.. Its pathway is glucan metabolism; xyloglucan degradation. Functionally, catalyzes the hydrolysis of terminal non-reducing beta-D-galactose residues in beta-D-galactosides in xyloglucan degradation, converting 'L' units to 'X' units. The sequence is that of Beta-galactosidase BoGH2A from Bacteroides ovatus (strain ATCC 8483 / DSM 1896 / JCM 5824 / BCRC 10623 / CCUG 4943 / NCTC 11153).